A 708-amino-acid chain; its full sequence is Lactotransferrin (708 aa).

The first 19 residues, 1 to 19 (MKLFFPALLSLGALGLCLA), serve as a signal peptide directing secretion. 2 consecutive Transferrin-like domains span residues 25-352 (VRWC…GLRE) and 364-693 (VVWC…KLRR). 2 cysteine pairs are disulfide-bonded: Cys-28/Cys-64 and Cys-38/Cys-55. Positions 44 to 51 (RMKKVRGP) are interaction with E.coli ompC. Asp-79 provides a ligand contact to Fe(3+). Lys-92 is an active-site residue. Tyr-111 is a Fe(3+) binding site. 5 disulfide bridges follow: Cys-134–Cys-217, Cys-176–Cys-192, Cys-179–Cys-202, Cys-189–Cys-200, and Cys-250–Cys-264. 4 residues coordinate hydrogencarbonate: Thr-136, Arg-140, Ala-142, and Gly-143. Tyr-211 is a Fe(3+) binding site. N-linked (GlcNAc...) asparagine glycosylation occurs at Asn-252. His-272 serves as a coordination point for Fe(3+). Ser-278 (nucleophile) is an active-site residue. Disulfide bonds link Cys-367–Cys-399 and Cys-377–Cys-390. Asn-385 carries an N-linked (GlcNAc...) asparagine glycan. The Fe(3+) site is built by Asp-414 and Tyr-452. 8 cysteine pairs are disulfide-bonded: Cys-424–Cys-703, Cys-444–Cys-666, Cys-476–Cys-551, Cys-500–Cys-694, Cys-510–Cys-524, Cys-521–Cys-534, Cys-592–Cys-606, and Cys-644–Cys-649. Hydrogencarbonate is bound by residues Thr-478, Arg-482, Ala-484, and Gly-485. N-linked (GlcNAc...) asparagine glycosylation is present at Asn-537. Fe(3+) is bound at residue Tyr-545. Residue Asn-594 is glycosylated (N-linked (GlcNAc...) asparagine). His-614 is a Fe(3+) binding site.

This sequence belongs to the transferrin family. As to quaternary structure, monomer. Found in a complex with LTF, CLU, EPPIN and SEMG1. Interacts with E.coli outer membrane protein C (OmpC). Found in a complex with MPO and LTF; interacts directly with CP, allows Fe(3+) incorporation into LTF and activation of CP ferroxidase activity. Post-translationally, poly-N-acetyllactosaminic carbohydrate moiety seems to be needed for TLR4 activation.

It localises to the secreted. It is found in the cytoplasmic granule. In terms of biological role, transferrins are iron binding transport proteins which can bind two Fe(3+) ions in association with the binding of an anion, usually bicarbonate. Functionally, major iron-binding and multifunctional protein found in exocrine fluids such as breast milk and mucosal secretions. Has antimicrobial activity, which depends on the extracellular cation concentration. Antimicrobial properties include bacteriostasis, which is related to its ability to sequester free iron and thus inhibit microbial growth, as well as direct bactericidal properties leading to the release of lipopolysaccharides from the bacterial outer membrane. Can also prevent bacterial biofilm development in P.aeruginosa infection. Has weak antifungal activity against C.albicans. Has anabolic, differentiating and anti-apoptotic effects on osteoblasts and can also inhibit osteoclastogenesis, possibly playing a role in the regulation of bone growth. Promotes binding of species C adenoviruses to epithelial cells, promoting adenovirus infection. Can inhibit papillomavirus infections. Stimulates the TLR4 signaling pathway leading to NF-kappa-B activation and subsequent pro-inflammatory cytokine production while also interfering with the lipopolysaccharide (LPS)-stimulated TLR4 signaling. Inhibits neutrophil granulocyte migration to sites of apoptosis, when secreted by apoptotic cells. Stimulates VEGFA-mediated endothelial cell migration and proliferation. Binds heparin, chondroitin sulfate and possibly other glycosaminoglycans (GAGs). Also binds specifically to pneumococcal surface protein A (PspA), the lipid A portion of bacterial lipopolysaccharide (LPS), lysozyme and DNA. Lactoferricin binds to the bacterial surface and is crucial for the bactericidal functions. Has some antiviral activity against papillomavirus infection. N-terminal region shows strong antifungal activity against C.albicans. Contains two BBXB heparin-binding consensus sequences that appear to form the predominate functional GAG-binding site. Its function is as follows. The lactotransferrin transferrin-like domain 1 functions as a serine protease of the peptidase S60 family that cuts arginine rich regions. This function contributes to the antimicrobial activity. Shows a preferential cleavage at -Arg-Ser-Arg-Arg-|- and -Arg-Arg-Ser-Arg-|-, and of Z-Phe-Arg-|-aminomethylcoumarin sites. In Camelus dromedarius (Dromedary), this protein is Lactotransferrin (LTF).